The chain runs to 320 residues: Malate dehydrogenase (320 aa).

NAD(+) contacts are provided by residues 10-15 and Asp-34; that span reads GSGMIG. Substrate contacts are provided by Arg-83 and Arg-89. NAD(+) contacts are provided by residues Asn-96 and 119–121; that span reads ITN. Substrate is bound by residues Asn-121 and Arg-152. Catalysis depends on His-176, which acts as the Proton acceptor.

The protein belongs to the LDH/MDH superfamily. MDH type 3 family.

It carries out the reaction (S)-malate + NAD(+) = oxaloacetate + NADH + H(+). Its function is as follows. Catalyzes the reversible oxidation of malate to oxaloacetate. This chain is Malate dehydrogenase, found in Brucella canis (strain ATCC 23365 / NCTC 10854 / RM-666).